We begin with the raw amino-acid sequence, 424 residues long: Serine--tRNA ligase (424 aa).

231–233 (TAE) contacts L-serine. ATP is bound by residues 262-264 (RRE) and Val278. Glu285 contacts L-serine. 349–352 (EVSS) is an ATP binding site. Ser384 is an L-serine binding site.

This sequence belongs to the class-II aminoacyl-tRNA synthetase family. Type-1 seryl-tRNA synthetase subfamily. Homodimer. The tRNA molecule binds across the dimer.

The protein localises to the cytoplasm. It catalyses the reaction tRNA(Ser) + L-serine + ATP = L-seryl-tRNA(Ser) + AMP + diphosphate + H(+). It carries out the reaction tRNA(Sec) + L-serine + ATP = L-seryl-tRNA(Sec) + AMP + diphosphate + H(+). It participates in aminoacyl-tRNA biosynthesis; selenocysteinyl-tRNA(Sec) biosynthesis; L-seryl-tRNA(Sec) from L-serine and tRNA(Sec): step 1/1. Its function is as follows. Catalyzes the attachment of serine to tRNA(Ser). Is also able to aminoacylate tRNA(Sec) with serine, to form the misacylated tRNA L-seryl-tRNA(Sec), which will be further converted into selenocysteinyl-tRNA(Sec). The polypeptide is Serine--tRNA ligase (Chlamydia abortus (strain DSM 27085 / S26/3) (Chlamydophila abortus)).